Consider the following 146-residue polypeptide: VHLTPEEKVAVTTLWGKVNVDEVGGEALGRLLVVYPWTQRFFESFGDLSNPDAVMGNPKVKAHGKKVLGAFSDGLNHLDNLKGTFAQLSELHCDKLHVDPENFKLLGNVLVCVLAHHFGKEFTPQVQAAYQKVVAGVANALAHKYH.

The residue at position 1 (Val-1) is an N-acetylvaline. The Globin domain maps to 2–146; that stretch reads HLTPEEKVAV…VANALAHKYH (145 aa). Thr-12 is subject to Phosphothreonine. At Ser-44 the chain carries Phosphoserine. An N6-acetyllysine modification is found at Lys-59. A heme b-binding site is contributed by His-63. Lys-82 is subject to N6-acetyllysine. His-92 contributes to the heme b binding site. Residue Cys-93 is modified to S-nitrosocysteine. Position 144 is an N6-acetyllysine (Lys-144).

Belongs to the globin family. In terms of assembly, heterotetramer of two alpha chains and two beta chains. As to expression, red blood cells.

In terms of biological role, involved in oxygen transport from the lung to the various peripheral tissues. This Cercocebus atys (Sooty mangabey) protein is Hemoglobin subunit beta (HBB).